A 691-amino-acid polypeptide reads, in one-letter code: ATP-dependent RNA helicase MRH4, mitochondrial (691 aa).

The transit peptide at 1–31 directs the protein to the mitochondrion; the sequence is MLIGQVSRLSAIPPLALQHTLRPLHSSSVLA. The segment at 31–148 is disordered; it reads AAGGKRPKQS…ATMPPNLTPR (118 aa). The segment covering 39 to 49 has biased composition (polar residues); that stretch reads QSPSHSRNSPR. Over residues 50–68 the composition is skewed to basic and acidic residues; that stretch reads QKPDWEKRGSNRGRSEQPR. Over residues 94–103 the composition is skewed to low complexity; sequence SDSSSGSSAS. The segment covering 111–126 has biased composition (polar residues); sequence VPTSSRRLLPFSSSDT. A Q motif motif is present at residues 183–213; sequence RTFDDFGLEEGLVKSLKGLYGEDGKTTPIET. Residues 225–433 enclose the Helicase ATP-binding domain; sequence ASAPIGSQRV…TTNPFFTKKE (209 aa). 238–245 lines the ATP pocket; sequence AETGSGKT. The DEAD box signature appears at 382–385; the sequence is DEAD. Residues 474–691 enclose the Helicase C-terminal domain; sequence TLAEDAKAAK…VGAMGKRVRT (218 aa). The disordered stretch occupies residues 644 to 667; sequence LGEGAKNNKGGKGQGPLKKDGKTA.

Belongs to the DEAD box helicase family. MRH4 subfamily.

The protein resides in the mitochondrion. It catalyses the reaction ATP + H2O = ADP + phosphate + H(+). Its function is as follows. ATP-binding RNA helicase involved in mitochondrial RNA metabolism. Required for maintenance of mitochondrial DNA. The chain is ATP-dependent RNA helicase MRH4, mitochondrial (MRH4) from Cryptococcus neoformans var. neoformans serotype D (strain JEC21 / ATCC MYA-565) (Filobasidiella neoformans).